We begin with the raw amino-acid sequence, 428 residues long: Glutamate-1-semialdehyde 2,1-aminomutase (428 aa).

K265 is subject to N6-(pyridoxal phosphate)lysine.

Belongs to the class-III pyridoxal-phosphate-dependent aminotransferase family. HemL subfamily. As to quaternary structure, homodimer. Pyridoxal 5'-phosphate serves as cofactor.

Its subcellular location is the cytoplasm. It carries out the reaction (S)-4-amino-5-oxopentanoate = 5-aminolevulinate. It participates in porphyrin-containing compound metabolism; protoporphyrin-IX biosynthesis; 5-aminolevulinate from L-glutamyl-tRNA(Glu): step 2/2. The chain is Glutamate-1-semialdehyde 2,1-aminomutase from Vesicomyosocius okutanii subsp. Calyptogena okutanii (strain HA).